The sequence spans 61 residues: Sperm protamine P1 (61 aa).

Residues Met-1–Arg-61 form a disordered region.

This sequence belongs to the protamine P1 family. Testis.

Its subcellular location is the nucleus. It localises to the chromosome. Its function is as follows. Protamines substitute for histones in the chromatin of sperm during the haploid phase of spermatogenesis. They compact sperm DNA into a highly condensed, stable and inactive complex. This chain is Sperm protamine P1 (PRM1), found in Dasyurus hallucatus (Northern quoll).